Reading from the N-terminus, the 101-residue chain is Apolipoprotein C-II (101 aa).

Residues 1–22 form the signal peptide; the sequence is MGTRFLLALFLVLLVLGLEVQA. Residues 66 to 74 form a lipid binding region; that stretch reads AVDERIRDM. The segment at 78-101 is lipoprotein lipase cofactor; the sequence is STAAVTTYAGIFTDQLFSMLKGEQ.

The protein belongs to the apolipoprotein C2 family. Post-translationally, proapolipoprotein C-II is synthesized as a sialic acid containing glycoprotein which is subsequently desialylated prior to its proteolytic processing. Proapolipoprotein C-II, the major form found in plasma undergoes proteolytic cleavage of its N-terminal hexapeptide to generate apolipoprotein C-II, which occurs as the minor form in plasma.

The protein resides in the secreted. Component of chylomicrons, very low-density lipoproteins (VLDL), low-density lipoproteins (LDL), and high-density lipoproteins (HDL) in plasma. Plays an important role in lipoprotein metabolism as an activator of lipoprotein lipase. Both proapolipoprotein C-II and apolipoprotein C-II can activate lipoprotein lipase. The sequence is that of Apolipoprotein C-II (APOC2) from Tupaia glis (Common tree shrew).